A 134-amino-acid chain; its full sequence is MTLRRGSCPLLLFSLVGLLTTCAQEPDAAGQNTTAVAEKAGTCPQAELEMPDRNCTEACQSDAGCEENKKCCRTGCGTSCQIPDEKPGSCPNVDTPIPPLGLCKTTCSKDSDCSETKKCCKNGCGFMTCTTARP.

The first 23 residues, 1 to 23 (MTLRRGSCPLLLFSLVGLLTTCA), serve as a signal peptide directing secretion. 2 WAP domains span residues 36 to 82 (VAEK…SCQI) and 83 to 133 (PDEK…TTAR). Cystine bridges form between cysteine 43-cysteine 72, cysteine 55-cysteine 76, cysteine 59-cysteine 71, cysteine 65-cysteine 80, cysteine 90-cysteine 120, cysteine 103-cysteine 124, cysteine 107-cysteine 119, and cysteine 113-cysteine 129.

Belongs to the venom waprin family. Expressed by the venom gland.

Its subcellular location is the secreted. Functionally, damages membranes of susceptible bacteria. Has no hemolytic activity. Not toxic to mice. Does not inhibit the proteinases elastase and cathepsin G. The chain is Waprin-Phi1 from Philodryas olfersii (Green snake).